The following is a 777-amino-acid chain: Endonuclease MutS2 (777 aa).

328 to 335 serves as a coordination point for ATP; that stretch reads GPNTGGKT. Positions 702–777 constitute a Smr domain; it reads LDLRGKRYEE…GSGCTIATLG (76 aa).

The protein belongs to the DNA mismatch repair MutS family. MutS2 subfamily. As to quaternary structure, homodimer. Binds to stalled ribosomes, contacting rRNA.

Functionally, endonuclease that is involved in the suppression of homologous recombination and thus may have a key role in the control of bacterial genetic diversity. In terms of biological role, acts as a ribosome collision sensor, splitting the ribosome into its 2 subunits. Detects stalled/collided 70S ribosomes which it binds and splits by an ATP-hydrolysis driven conformational change. Acts upstream of the ribosome quality control system (RQC), a ribosome-associated complex that mediates the extraction of incompletely synthesized nascent chains from stalled ribosomes and their subsequent degradation. Probably generates substrates for RQC. The sequence is that of Endonuclease MutS2 from Streptococcus uberis (strain ATCC BAA-854 / 0140J).